A 179-amino-acid polypeptide reads, in one-letter code: Large ribosomal subunit protein uL5 (179 aa).

This sequence belongs to the universal ribosomal protein uL5 family. Part of the 50S ribosomal subunit; part of the 5S rRNA/L5/L18/L25 subcomplex. Contacts the 5S rRNA and the P site tRNA. Forms a bridge to the 30S subunit in the 70S ribosome.

Its function is as follows. This is one of the proteins that bind and probably mediate the attachment of the 5S RNA into the large ribosomal subunit, where it forms part of the central protuberance. In the 70S ribosome it contacts protein S13 of the 30S subunit (bridge B1b), connecting the 2 subunits; this bridge is implicated in subunit movement. Contacts the P site tRNA; the 5S rRNA and some of its associated proteins might help stabilize positioning of ribosome-bound tRNAs. This is Large ribosomal subunit protein uL5 from Prochlorococcus marinus (strain SARG / CCMP1375 / SS120).